We begin with the raw amino-acid sequence, 867 residues long: Dynamin-1 (867 aa).

Residues Asp-28–Pro-294 enclose the Dynamin-type G domain. Residues Gly-38 to Ser-45 form a G1 motif region. Ser-41, Gly-43, Lys-44, Ser-45, Ser-46, Arg-59, and Gly-60 together coordinate GDP. The interval Val-64–Arg-66 is G2 motif. Tyr-80 is modified (phosphotyrosine). Tyr-125 is subject to 3'-nitrotyrosine; alternate. Tyr-125 is modified (phosphotyrosine; alternate). Positions Asp-136 to Gly-139 are G3 motif. The interval Thr-205 to Asp-208 is G4 motif. GDP contacts are provided by Lys-206, Asp-208, Asp-211, Asn-236, Arg-237, and Gln-239. The segment at Val-235–Ser-238 is G5 motif. Phosphoserine occurs at positions 306 and 347. Residue Tyr-354 is modified to Phosphotyrosine. At Ser-512 the chain carries Phosphoserine. The region spanning Gln-515 to Val-625 is the PH domain. A GED domain is found at Val-659–Val-750. The segment at Ser-767–Leu-867 is disordered. Residues Ser-774 and Ser-778 each carry the phosphoserine modification. Arg-796 is modified (omega-N-methylarginine). Ser-822 is subject to Phosphoserine. The segment covering Pro-825–Val-843 has biased composition (pro residues). Gly-847, Leu-851, and Lys-857 each carry phosphoserine. Positions Gly-856–Leu-867 are enriched in basic and acidic residues.

Belongs to the TRAFAC class dynamin-like GTPase superfamily. Dynamin/Fzo/YdjA family. In terms of assembly, homodimer; homodimerization is mediated by the dynamin-type G domain which promotes assembly-stimulated GTPase activity. Homo-tetramer formed from two dimers in the absence of lipid. Oligomerizes into a helical polymer that self-assembles around the vesicle membrane, when associated to the menbrane through lipid binding. Interacts (via C-terminal proline-rich domain (PRD)) with SNX9 (via SH3 domain); this interaction allows regulation of DNM1 self-assembly during late stages of endocytic vesicle formation and supports DNM1's early functions in accelerating clathrin-coated pits (CCPs) maturation in non neuronals cell. Interacts (via C-terminal proline-rich domain (PRD)) with MYO1E (via SH3 domain); this interaction regulates receptor-mediated endocytosis. Interacts with SNX33 (via SH3 domain); this interaction decreases DNM1-dependent endocytosis. Interacts with DIAPH1. Interacts with GRB2 (via SH3 domain); this interaction mediates disassembly of DNM1 polymers, therefore modulates self-assembly. Forms a complex with BIN1 (via SH3 domain) and SH3GL2 (via SH3 domain). Forms a complex with SH3GL2 (via SH3 domain) and AMPH (via SH3 domain). Forms a complex with SH3GL2 (via SH3 domain) and SYNJ1. Interacts (via C-terminal proline-rich domain (PRD)) with SYT1; this interaction facilitates vesicle fission during clathrin-mediated endocytosis (CME). Interacts (via C-terminal proline-rich domain (PRD)) with PLCG1 (via SH3 domain); this interaction stimulates the release of GDP from DNM1 and enhances DNM1-dependent endocytosis. Interacts with SNPH; this interaction inhibits the binding of DNM1 to AMPH and DNM1-receptor-mediated endocytosis. Interacts with CAV1. Interacts with SH3GLB1 (via SH3 domain). Interacts with PACSIN1 (via SH3 domain), PACSIN2 (via SH3 domain) and PACSIN3 (via SH3 domain). Interacts with UNC119; this interaction decreases DNM1's GTPase activity and affects DNM1's interaction with AMPH. Interacts with AMPH. Interacts (GTP-bound form) with DNAJC6; this interaction allows clathrin-coated vesicle (CCV) formation at the plasma membrane. Phosphorylation at Ser-774 by GSK3B/GSK3-beta leads to inactivation of receptor-mediated endocytosis in non-neuronal cells. Dephosphorylation at Ser-774, through the EGFR downstream signaling, leads to activation and regulates early stages of clathrin-mediated endocytosis (CME). Phosphorylated on Tyr in response to EGF stimulation in cells expressing truncated EGFR. Phosphorylated by CDK5 leading to synaptic vesicle endocytosis (SVE) activation. Expressed exclusively in the brain.

It localises to the cell membrane. The protein localises to the membrane. Its subcellular location is the clathrin-coated pit. It is found in the cytoplasmic vesicle. The protein resides in the presynapse. It localises to the secretory vesicle. The protein localises to the chromaffin granule. It catalyses the reaction GTP + H2O = GDP + phosphate + H(+). In terms of biological role, catalyzes the hydrolysis of GTP and utilizes this energy to mediate vesicle scission and participates in many forms of endocytosis, such as clathrin-mediated endocytosis or synaptic vesicle endocytosis as well as rapid endocytosis (RE). Associates to the membrane, through lipid binding, and self-assembles into rings and stacks of interconnected rings through oligomerization to form a helical polymer around the vesicle membrane leading to constriction of invaginated coated pits around their necks. Self-assembly of the helical polymer induces membrane tubules narrowing until the polymer reaches a length sufficient to trigger GTP hydrolysis. Depending on the curvature imposed on the tubules, membrane detachment from the helical polymer upon GTP hydrolysis can cause spontaneous hemifission followed by complete fission. May play a role in regulating early stages of clathrin-mediated endocytosis in non-neuronal cells through its activation by dephosphorylation via the signaling downstream of EGFR. Controls vesicle size at a step before fission, during formation of membrane pits, at hippocampal synapses. Controls plastic adaptation of the synaptic vesicle recycling machinery to high levels of activity. Mediates rapid endocytosis (RE), a Ca(2+)-dependent and clathrin- and K(+)-independent process in chromaffin cells. Microtubule-associated force-producing protein involved in producing microtubule bundles and able to bind and hydrolyze GTP. Through its interaction with DNAJC6, acts during the early steps of clathrin-coated vesicle (CCV) formation. The polypeptide is Dynamin-1 (Mus musculus (Mouse)).